Consider the following 74-residue polypeptide: DNA-directed RNA polymerase subunit omega (74 aa).

Belongs to the RNA polymerase subunit omega family. The RNAP catalytic core consists of 2 alpha, 1 beta/beta' and 1 omega subunit. When a sigma factor is associated with the core the holoenzyme is formed, which can initiate transcription.

The catalysed reaction is RNA(n) + a ribonucleoside 5'-triphosphate = RNA(n+1) + diphosphate. Functionally, promotes RNA polymerase assembly. Latches the N- and C-terminal regions of the beta' subunit thereby facilitating its interaction with the beta and alpha subunits. The polypeptide is DNA-directed RNA polymerase subunit omega (Helicobacter hepaticus (strain ATCC 51449 / 3B1)).